Consider the following 162-residue polypeptide: Protein NrdI (162 aa).

It belongs to the NrdI family.

Probably involved in ribonucleotide reductase function. This is Protein NrdI from Streptococcus pyogenes serotype M2 (strain MGAS10270).